Here is a 667-residue protein sequence, read N- to C-terminus: MSKVHQSACPLNCWDSCGFLVTVDDGKVTKVDGDPNHPITEGKICGRGRMLETKTNSPDRLRYPMKKQNGEFVRISWEQALDEIADKLREIKETSETTAVLHSHDYANNGLLKALDQRFFNGYGGVTEIVGSICWGSGIEAQSWDFGRSYGHGPLDIYNSKHVVVWGRNVSRTNMHLYHHLQQVKKKGATITVIDPIFNPTAKLADRYISVKPGMDGWLAAAVLKVLIEMGRTDETFISEHSVGFDDVKELLKTVSLEEFIVKTETSMEELEYLAGLYADGPVSTFMGLGMQRYKNGGGTIRWIDALVAASGNVGIKGGGANFGNVQIGESFAKTKLTLPELKTTSRSFSMMTQAEEVLTAADPAIEMIIVTCGNPLTQVPNTNKVRQAFEKVPMTVAIDSIMTDTAELCDYVLPTATVFEEEDIYYSSMYHHYVQYGKKLVEPQGEAKSDSWIWSELAKRLGFGELFEYSTQEFLEMGLSSLEAEDVTLERLKEKGHLPLPVKQVPWDDYQFLTPSGKFEFTSSLAEQKGFSGSLQLNVPEESVFHNEELAGKYPYTLLSIHPQRSNHSQHVPFIEKLQHVQVDISPDIAAGQDLQDGDEVVIFNDRGSMKGKVKVMKQAHAKTINIDEGMWAAFGGSVNALTNDTNSDNGMGSTLFDCLVGLKKA.

The 4Fe-4S Mo/W bis-MGD-type domain maps to 2–59; the sequence is SKVHQSACPLNCWDSCGFLVTVDDGKVTKVDGDPNHPITEGKICGRGRMLETKTNSPD. Residues cysteine 9, cysteine 13, cysteine 17, and cysteine 45 each coordinate [4Fe-4S] cluster.

The protein belongs to the prokaryotic molybdopterin-containing oxidoreductase family. Mo-bis(molybdopterin guanine dinucleotide) serves as cofactor.

The chain is Probable oxidoreductase YyaE (yyaE) from Bacillus subtilis (strain 168).